The chain runs to 211 residues: tRNA (guanine-N(7)-)-methyltransferase (211 aa).

S-adenosyl-L-methionine is bound by residues E43, E68, D95, and D117. Residue D117 is part of the active site. Substrate contacts are provided by residues K121, D153, and 190–193 (TEYE).

Belongs to the class I-like SAM-binding methyltransferase superfamily. TrmB family.

The catalysed reaction is guanosine(46) in tRNA + S-adenosyl-L-methionine = N(7)-methylguanosine(46) in tRNA + S-adenosyl-L-homocysteine. The protein operates within tRNA modification; N(7)-methylguanine-tRNA biosynthesis. Functionally, catalyzes the formation of N(7)-methylguanine at position 46 (m7G46) in tRNA. The sequence is that of tRNA (guanine-N(7)-)-methyltransferase from Staphylococcus saprophyticus subsp. saprophyticus (strain ATCC 15305 / DSM 20229 / NCIMB 8711 / NCTC 7292 / S-41).